We begin with the raw amino-acid sequence, 259 residues long: Keratin-associated protein 10-8 (259 aa).

Positions 26–243 are 19 X 5 AA repeats of C-C-X(3); sequence HVSRVSSPST…SCQPSCCHPA (218 aa). A run of 19 repeats spans residues 50-54, 60-64, 65-69, 98-102, 108-112, 118-122, 123-127, 133-137, 145-149, 155-159, 165-169, 170-174, 175-179, 187-191, 197-201, 202-206, 221-225, 228-232, and 239-243.

Belongs to the KRTAP type 10 family. As to quaternary structure, interacts with hair keratins. In terms of tissue distribution, restricted to a narrow region of the hair fiber cuticle, lying approximately 20 cell layers above the apex of the dermal papilla of the hair root; not detected in any other tissues.

Its function is as follows. In the hair cortex, hair keratin intermediate filaments are embedded in an interfilamentous matrix, consisting of hair keratin-associated proteins (KRTAP), which are essential for the formation of a rigid and resistant hair shaft through their extensive disulfide bond cross-linking with abundant cysteine residues of hair keratins. The matrix proteins include the high-sulfur and high-glycine-tyrosine keratins. This is Keratin-associated protein 10-8 (KRTAP10-8) from Homo sapiens (Human).